Reading from the N-terminus, the 690-residue chain is Iron-sulfur clusters transporter ATM1, mitochondrial (690 aa).

The transit peptide at 1 to 26 (MLLLPRCPVIGRIVRSKFRSGLIRNH) directs the protein to the mitochondrion. At 27-110 (SPVIFTVSKL…PKGNNKVRIR (84 aa)) the chain is on the mitochondrial matrix side. Residues 111-132 (VLIALGLLISAKILNVQVPFFF) form a helical membrane-spanning segment. Residues 111–401 (VLIALGLLIS…LGSVYRDLKQ (291 aa)) form the ABC transmembrane type-1 domain. Topologically, residues 133–155 (KQTIDSMNIAWDDPTVALPAAIG) are mitochondrial intermembrane. Residues 156–179 (LTILCYGVARFGSVLFGELRNAVF) traverse the membrane as a helical segment. At 180-228 (AKVAQNAIRTVSLQTFQHLMKLDLGWHLSRQTGGLTRAMDRGTKGISQV) the chain is on the mitochondrial matrix side. The helical transmembrane segment at 229-252 (LTAMVFHIIPISFEISVVCGILTY) threads the bilayer. Residue Gln-253 is a topological domain, mitochondrial intermembrane. Residues 254 to 274 (FGASFAAITFSTMLLYSIFTI) traverse the membrane as a helical segment. At 275–340 (KTTAWRTHFR…SQIKVSQSLA (66 aa)) the chain is on the mitochondrial matrix side. Glutathione contacts are provided by residues 280–284 (RTHFR) and 343–346 (NSGQ). The helical transmembrane segment at 341 to 359 (FLNSGQNLIFTTALTAMMY) threads the bilayer. At 360-374 (MGCTGVIGGNLTVGD) the chain is on the mitochondrial intermembrane side. The helical transmembrane segment at 375 to 396 (LVLINQLVFQLSVPLNFLGSVY) threads the bilayer. Gly-393 serves as a coordination point for glutathione. At 397-690 (RDLKQSLIDM…ENELKDQQEL (294 aa)) the chain is on the mitochondrial matrix side. The region spanning 436 to 672 (ITFENVTFGY…PGSLYRELWT (237 aa)) is the ABC transporter domain. ATP is bound by residues Tyr-445 and 469–480 (GSSGSGKSTILK).

It belongs to the ABC transporter superfamily. ABCB family. Heavy Metal importer (TC 3.A.1.210) subfamily. As to quaternary structure, homodimer.

Its subcellular location is the mitochondrion inner membrane. Performs an essential function in the generation of cytoplasmic iron-sulfur proteins by mediating the ATP-dependent export of Fe/S cluster precursors synthesized by NFS1 and other mitochondrial proteins. Hydrolyzes ATP. Binds glutathione and may function by transporting a glutathione-conjugated iron-sulfur compound. This chain is Iron-sulfur clusters transporter ATM1, mitochondrial, found in Saccharomyces cerevisiae (strain ATCC 204508 / S288c) (Baker's yeast).